Reading from the N-terminus, the 599-residue chain is Sulfite reductase [NADPH] flavoprotein alpha-component (599 aa).

The 139-residue stretch at 64-202 (ITIISASQTG…AASEWRARVV (139 aa)) folds into the Flavodoxin-like domain. Residues 70-75 (SQTGNA), 117-120 (STQG), and 153-162 (LGDSSYEFFC) each bind FMN. The 215-residue stretch at 234-448 (DSPLVASLSV…IEHNDNFRLP (215 aa)) folds into the FAD-binding FR-type domain. Residues Thr-322, Ala-356, 386-389 (RLYS), 404-406 (TVG), Tyr-410, and 419-422 (GGAS) each bind FAD. NADP(+) contacts are provided by residues 519 to 520 (SR), 525 to 529 (KVYVQ), and Asp-561. Residue Tyr-599 coordinates FAD.

The protein belongs to the NADPH-dependent sulphite reductase flavoprotein subunit CysJ family. In the N-terminal section; belongs to the flavodoxin family. This sequence in the C-terminal section; belongs to the flavoprotein pyridine nucleotide cytochrome reductase family. In terms of assembly, alpha(8)-beta(8). The alpha component is a flavoprotein, the beta component is a hemoprotein. FAD is required as a cofactor. It depends on FMN as a cofactor.

It catalyses the reaction hydrogen sulfide + 3 NADP(+) + 3 H2O = sulfite + 3 NADPH + 4 H(+). It functions in the pathway sulfur metabolism; hydrogen sulfide biosynthesis; hydrogen sulfide from sulfite (NADPH route): step 1/1. Component of the sulfite reductase complex that catalyzes the 6-electron reduction of sulfite to sulfide. This is one of several activities required for the biosynthesis of L-cysteine from sulfate. The flavoprotein component catalyzes the electron flow from NADPH -&gt; FAD -&gt; FMN to the hemoprotein component. The sequence is that of Sulfite reductase [NADPH] flavoprotein alpha-component from Escherichia coli O9:H4 (strain HS).